We begin with the raw amino-acid sequence, 409 residues long: Argininosuccinate synthase (409 aa).

ATP-binding positions include 13–21 and Ala40; that span reads AYSGGLDTS. L-citrulline-binding residues include Tyr91 and Ser96. Gly121 serves as a coordination point for ATP. Thr123, Asn127, and Asp128 together coordinate L-aspartate. Residue Asn127 coordinates L-citrulline. Positions 131, 183, 192, 268, and 280 each coordinate L-citrulline.

It belongs to the argininosuccinate synthase family. Type 1 subfamily. In terms of assembly, homotetramer.

The protein localises to the cytoplasm. It catalyses the reaction L-citrulline + L-aspartate + ATP = 2-(N(omega)-L-arginino)succinate + AMP + diphosphate + H(+). It participates in amino-acid biosynthesis; L-arginine biosynthesis; L-arginine from L-ornithine and carbamoyl phosphate: step 2/3. The sequence is that of Argininosuccinate synthase from Saccharophagus degradans (strain 2-40 / ATCC 43961 / DSM 17024).